Here is a 413-residue protein sequence, read N- to C-terminus: uncharacterized protein (413 aa).

Residues L14–L34 traverse the membrane as a helical segment. N-linked (GlcNAc...) asparagine; by host glycans are attached at residues N46, N55, N103, N171, N179, N184, N220, N252, N260, N273, N362, N366, N374, N378, N393, and N408. The span at T250 to E263 shows a compositional bias: low complexity. Residues T250–P277 form a disordered region. Residues I264–P277 are compositionally biased toward polar residues.

It is found in the membrane. This is an uncharacterized protein from Acanthamoeba polyphaga (Amoeba).